A 201-amino-acid polypeptide reads, in one-letter code: Recombination protein RecR (201 aa).

The segment at 57–72 adopts a C4-type zinc-finger fold; sequence CADCRTFTEQDVCNIC. The Toprim domain occupies 81-176; that stretch reads GQICVVESPA…SASRIAHGVP (96 aa).

The protein belongs to the RecR family.

In terms of biological role, may play a role in DNA repair. It seems to be involved in an RecBC-independent recombinational process of DNA repair. It may act with RecF and RecO. The protein is Recombination protein RecR of Enterobacter sp. (strain 638).